A 365-amino-acid chain; its full sequence is uncharacterized protein (365 aa).

The next 3 helical transmembrane spans lie at 105–125 (TGNWFLVILFLALLWLRQCWL), 151–171 (ILTTLVTVGTTLGTPVFSLTI), and 187–207 (IFLIIFSVFSISLGLVSSLIF).

The protein resides in the cell membrane. This is an uncharacterized protein from Mycoplasma genitalium (strain ATCC 33530 / DSM 19775 / NCTC 10195 / G37) (Mycoplasmoides genitalium).